A 67-amino-acid polypeptide reads, in one-letter code: DNA-directed RNA polymerase subunit omega (67 aa).

The protein belongs to the RNA polymerase subunit omega family. As to quaternary structure, RNAP is composed of a core of 2 alpha, a beta and a beta' subunit. The core is associated with a delta subunit, and at least one of epsilon or omega. When a sigma factor is associated with the core the holoenzyme is formed, which can initiate transcription.

The catalysed reaction is RNA(n) + a ribonucleoside 5'-triphosphate = RNA(n+1) + diphosphate. In terms of biological role, promotes RNA polymerase assembly. Latches the N- and C-terminal regions of the beta' subunit thereby facilitating its interaction with the beta and alpha subunits. In vitro reconstitution experiments this subunit is dispensible. This Bacillus subtilis (strain 168) protein is DNA-directed RNA polymerase subunit omega (rpoZ).